Consider the following 198-residue polypeptide: FMN-dependent NADH:quinone oxidoreductase (198 aa).

Residue S10 coordinates FMN.

Belongs to the azoreductase type 1 family. In terms of assembly, homodimer. FMN serves as cofactor.

The catalysed reaction is 2 a quinone + NADH + H(+) = 2 a 1,4-benzosemiquinone + NAD(+). It carries out the reaction N,N-dimethyl-1,4-phenylenediamine + anthranilate + 2 NAD(+) = 2-(4-dimethylaminophenyl)diazenylbenzoate + 2 NADH + 2 H(+). Its function is as follows. Quinone reductase that provides resistance to thiol-specific stress caused by electrophilic quinones. Also exhibits azoreductase activity. Catalyzes the reductive cleavage of the azo bond in aromatic azo compounds to the corresponding amines. The chain is FMN-dependent NADH:quinone oxidoreductase from Paraburkholderia phymatum (strain DSM 17167 / CIP 108236 / LMG 21445 / STM815) (Burkholderia phymatum).